Here is a 460-residue protein sequence, read N- to C-terminus: Light-independent protochlorophyllide reductase subunit N (460 aa).

Residues cysteine 22, cysteine 47, and cysteine 107 each contribute to the [4Fe-4S] cluster site.

The protein belongs to the BchN/ChlN family. In terms of assembly, protochlorophyllide reductase is composed of three subunits; ChlL, ChlN and ChlB. Forms a heterotetramer of two ChlB and two ChlN subunits. [4Fe-4S] cluster is required as a cofactor.

It localises to the plastid. The protein localises to the cyanelle. It carries out the reaction chlorophyllide a + oxidized 2[4Fe-4S]-[ferredoxin] + 2 ADP + 2 phosphate = protochlorophyllide a + reduced 2[4Fe-4S]-[ferredoxin] + 2 ATP + 2 H2O. It functions in the pathway porphyrin-containing compound metabolism; chlorophyll biosynthesis (light-independent). Functionally, component of the dark-operative protochlorophyllide reductase (DPOR) that uses Mg-ATP and reduced ferredoxin to reduce ring D of protochlorophyllide (Pchlide) to form chlorophyllide a (Chlide). This reaction is light-independent. The NB-protein (ChlN-ChlB) is the catalytic component of the complex. In Cyanophora paradoxa, this protein is Light-independent protochlorophyllide reductase subunit N.